We begin with the raw amino-acid sequence, 468 residues long: MGFLGTGTWILVLVLPIQAFPKPGGSQDKSLHNRELSAERPLNEQIAEAEEDKIKKTYPPENKPGQSNYSFVDNLNLLKAITEKEKIEKERQSIRSSPLDNKLNVEDVDSTKNRKLIDDYDSTKSGLDHKFQDDPDGLHQLDGTPLTAEDIVHKIAARIYEENDRAVFDKIVSKLLNLGLITESQAHTLEDEVAEVLQKLISKEANNYEEDPNKPTSWTENQAGKIPEKVTPMAAIQDGLAKGENDETVSNTLTLTNGLERRTKTYSEDNFEELQYFPNFYALLKSIDSEKEAKEKETLITIMKTLIDFVKMMVKYGTISPEEGVSYLENLDEMIALQTKNKLEKNATDNISKLFPAPSEKSHEETDSTKEEAAKMEKEYGSLKDSTKDDNSNPGGKTDEPKGKTEAYLEAIRKNIEWLKKHDKKGNKEDYDLSKMRDFINKQADAYVEKGILDKEEAEAIKRIYSSL.

The N-terminal stretch at 1–19 (MGFLGTGTWILVLVLPIQA) is a signal peptide. The disordered stretch occupies residues 23 to 69 (PGGSQDKSLHNRELSAERPLNEQIAEAEEDKIKKTYPPENKPGQSNY). A compositionally biased stretch (basic and acidic residues) spans 29 to 42 (KSLHNRELSAERPL). Phosphoserine is present on serine 37. An O-linked (Xyl...) (chondroitin sulfate) serine glycan is attached at serine 37. 2 O-linked (GalNAc...) threonine glycosylation sites follow: threonine 216 and threonine 231. Positions 353–406 (KLFPAPSEKSHEETDSTKEEAAKMEKEYGSLKDSTKDDNSNPGGKTDEPKGKTE) are disordered. Residue serine 359 is glycosylated (O-linked (GalNAc...) serine). A compositionally biased stretch (basic and acidic residues) spans 360-406 (EKSHEETDSTKEEAAKMEKEYGSLKDSTKDDNSNPGGKTDEPKGKTE). A Phosphoserine modification is found at serine 362.

In terms of assembly, interacts with CHGA. Interacts with secretogranin II/SCG2. Interacts (via C-terminus) with CPE. Post-translationally, O-glycosylated. In terms of tissue distribution, detected in urine (at protein level). Expressed in brain, heart, kidney, liver and skeletal muscle.

It is found in the cytoplasmic vesicle. The protein resides in the secretory vesicle. It localises to the secretory vesicle membrane. Its subcellular location is the secreted. In terms of biological role, member of the granin protein family that regulates the biogenesis of secretory granules. Acts as a sorting receptor for intragranular proteins including chromogranin A/CHGA. May also play a role in angiogenesis. Promotes endothelial proliferation, migration and tube formation through MEK/ERK signaling pathway. This chain is Secretogranin-3 (SCG3), found in Homo sapiens (Human).